The chain runs to 201 residues: Adenylyl-sulfate kinase (201 aa).

ATP is bound at residue 35–42 (GLSGSGKS). Ser-109 serves as the catalytic Phosphoserine intermediate.

It belongs to the APS kinase family.

It carries out the reaction adenosine 5'-phosphosulfate + ATP = 3'-phosphoadenylyl sulfate + ADP + H(+). It participates in sulfur metabolism; hydrogen sulfide biosynthesis; sulfite from sulfate: step 2/3. In terms of biological role, catalyzes the synthesis of activated sulfate. This Klebsiella pneumoniae (strain 342) protein is Adenylyl-sulfate kinase.